Consider the following 220-residue polypeptide: Deoxyribose-phosphate aldolase (220 aa).

D89 serves as the catalytic Proton donor/acceptor. K151 functions as the Schiff-base intermediate with acetaldehyde in the catalytic mechanism. K180 acts as the Proton donor/acceptor in catalysis.

Belongs to the DeoC/FbaB aldolase family. DeoC type 1 subfamily.

It is found in the cytoplasm. It catalyses the reaction 2-deoxy-D-ribose 5-phosphate = D-glyceraldehyde 3-phosphate + acetaldehyde. The protein operates within carbohydrate degradation; 2-deoxy-D-ribose 1-phosphate degradation; D-glyceraldehyde 3-phosphate and acetaldehyde from 2-deoxy-alpha-D-ribose 1-phosphate: step 2/2. In terms of biological role, catalyzes a reversible aldol reaction between acetaldehyde and D-glyceraldehyde 3-phosphate to generate 2-deoxy-D-ribose 5-phosphate. The sequence is that of Deoxyribose-phosphate aldolase from Streptococcus pneumoniae (strain 70585).